Here is a 461-residue protein sequence, read N- to C-terminus: Photosystem II CP43 reaction center protein (461 aa).

A propeptide spanning residues 1 to 2 (ME) is cleaved from the precursor. T3 carries the post-translational modification N-acetylthreonine. T3 is subject to Phosphothreonine. 5 helical membrane passes run 57 to 81 (LFEV…PHLA), 122 to 143 (LIGP…KDKN), 166 to 188 (KAMY…RVIT), 243 to 263 (KPFA…LSYS), and 279 to 300 (WFNN…ASQA). [CaMn4O5] cluster is bound at residue E355. A helical membrane pass occupies residues 435–459 (RARAAAAGFEKGIERETEPALSMKP).

It belongs to the PsbB/PsbC family. PsbC subfamily. In terms of assembly, PSII is composed of 1 copy each of membrane proteins PsbA, PsbB, PsbC, PsbD, PsbE, PsbF, PsbH, PsbI, PsbJ, PsbK, PsbL, PsbM, PsbT, PsbX, PsbY, PsbZ, Psb30/Ycf12, at least 3 peripheral proteins of the oxygen-evolving complex and a large number of cofactors. It forms dimeric complexes. It depends on Binds multiple chlorophylls and provides some of the ligands for the Ca-4Mn-5O cluster of the oxygen-evolving complex. It may also provide a ligand for a Cl- that is required for oxygen evolution. PSII binds additional chlorophylls, carotenoids and specific lipids. as a cofactor.

It localises to the plastid. Its subcellular location is the chloroplast thylakoid membrane. In terms of biological role, one of the components of the core complex of photosystem II (PSII). It binds chlorophyll and helps catalyze the primary light-induced photochemical processes of PSII. PSII is a light-driven water:plastoquinone oxidoreductase, using light energy to abstract electrons from H(2)O, generating O(2) and a proton gradient subsequently used for ATP formation. In Chlorokybus atmophyticus (Soil alga), this protein is Photosystem II CP43 reaction center protein.